The sequence spans 350 residues: WD repeat-containing protein DWA2 (350 aa).

6 WD repeats span residues 39-79, 118-158, 166-205, 206-246, 250-290, and 311-350; these read KEEN…FDQR, AHVG…KSAE, GMRH…KNNS, IERA…FPVQ, GHTH…EHKT, and DYED…LPRR.

As to quaternary structure, interacts with ABI5 and DDB1A and DWA1.

Its subcellular location is the nucleus. It functions in the pathway protein modification; protein ubiquitination. Functionally, component of the CUL4-RBX1-DDB1-DWA1/DWA2 E3 ubiquitin-protein ligase complex that acts as a negative regulator in abscisic acid (ABA) signaling. May function as the substrate recognition module within this complex leading to ABI5 degradation. Functionally redundant with DWA1. The sequence is that of WD repeat-containing protein DWA2 (DWA2) from Arabidopsis thaliana (Mouse-ear cress).